The primary structure comprises 345 residues: MVVPSPTSMIRTKKTKAVGIPTIDLSLERSQLSELVVKACEEYGFFKVVNHSVPKEVISRLDEEGIEFFSKNSSEKRQAGTSTPFGYGCKNIGPNGDKGELEYLLLHSNPISISERSKTIAKDHPIKFSCIVNDYIKAVKDLTCEILELAAEGLWVPDKSSLSKIIKDEHSDSLLRINHYPPVKKLGNDNWDPSKIQNSNNNNIGFGEHSDPQILTILRSNNVGGLQISTHHGLWIPVPPDPSEFYVMVGDALQVLTNGRFVSVRHRVLTNTTKPRMSMMYFAAPPLNWLISPLSKMVTAHSPCLYRPFTWAQYKQAAYALRLGDTRLDQFKVQKQEDSNDSHSL.

Positions 170-285 (HSDSLLRINH…RMSMMYFAAP (116 aa)) constitute a Fe2OG dioxygenase domain. Residues histidine 209, aspartate 211, and histidine 266 each coordinate Fe cation. Arginine 276 is a catalytic residue.

The protein belongs to the iron/ascorbate-dependent oxidoreductase family. GA2OX subfamily. Requires Fe cation as cofactor. Predominantly expressed in leaves.

The catalysed reaction is gibberellin A1 + 2-oxoglutarate + O2 = gibberellin A8 + succinate + CO2. It functions in the pathway plant hormone biosynthesis; gibberellin biosynthesis. Its function is as follows. Catalyzes the 2-beta-hydroxylation of several biologically active gibberellins, leading to the homeostatic regulation of their endogenous level. Catabolism of gibberellins (GAs) plays a central role in plant development. Converts GA9/GA20 to GA51/GA29 and GA4/GA1 to GA34/GA8. The sequence is that of Gibberellin 2-beta-dioxygenase 2 (GA2OX2) from Pisum sativum (Garden pea).